Reading from the N-terminus, the 153-residue chain is 3-hydroxyacyl-[acyl-carrier-protein] dehydratase FabZ (153 aa).

The active site involves His52.

It belongs to the thioester dehydratase family. FabZ subfamily.

The protein localises to the cytoplasm. It carries out the reaction a (3R)-hydroxyacyl-[ACP] = a (2E)-enoyl-[ACP] + H2O. In terms of biological role, involved in unsaturated fatty acids biosynthesis. Catalyzes the dehydration of short chain beta-hydroxyacyl-ACPs and long chain saturated and unsaturated beta-hydroxyacyl-ACPs. The polypeptide is 3-hydroxyacyl-[acyl-carrier-protein] dehydratase FabZ (Magnetococcus marinus (strain ATCC BAA-1437 / JCM 17883 / MC-1)).